Consider the following 85-residue polypeptide: Beta-insect depressant toxin BmKITa (85 aa).

The N-terminal stretch at 1-21 (MKLFLLLLISASMLIDGLVNA) is a signal peptide. Residues 22 to 82 (DGYIRGSNGC…TWKSESNTCG (61 aa)) form the LCN-type CS-alpha/beta domain. Cystine bridges form between Cys-31–Cys-81, Cys-35–Cys-56, Cys-42–Cys-63, and Cys-46–Cys-65. A Glycine amide modification is found at Gly-82.

Expressed by the venom gland.

The protein localises to the secreted. In terms of biological role, depressant insect beta-toxins cause a transient contraction paralysis followed by a slow flaccid paralysis. They bind voltage-independently at site-4 of sodium channels (Nav) and shift the voltage of activation toward more negative potentials thereby affecting sodium channel activation and promoting spontaneous and repetitive firing. This toxin also displays an evident analgesic effect but is devoid of any toxicity on mice. The polypeptide is Beta-insect depressant toxin BmKITa (Olivierus martensii (Manchurian scorpion)).